We begin with the raw amino-acid sequence, 241 residues long: tRNA (guanine-N(7)-)-methyltransferase (241 aa).

Residues 1–20 (MTESNDTPIQPEAGDERQHR) are disordered. S-adenosyl-L-methionine is bound by residues Glu-71, Glu-96, Asp-123, and Asp-146. Asp-146 is an active-site residue. Substrate contacts are provided by residues Lys-150, Asp-182, and 219–222 (TKFE).

The protein belongs to the class I-like SAM-binding methyltransferase superfamily. TrmB family.

It carries out the reaction guanosine(46) in tRNA + S-adenosyl-L-methionine = N(7)-methylguanosine(46) in tRNA + S-adenosyl-L-homocysteine. Its pathway is tRNA modification; N(7)-methylguanine-tRNA biosynthesis. Its function is as follows. Catalyzes the formation of N(7)-methylguanine at position 46 (m7G46) in tRNA. The protein is tRNA (guanine-N(7)-)-methyltransferase of Pseudomonas fluorescens (strain ATCC BAA-477 / NRRL B-23932 / Pf-5).